Consider the following 418-residue polypeptide: Inhibitor of growth protein 3 (418 aa).

The disordered stretch occupies residues 127-165 (DTPSQPVNNHHAHSHTPVEKRKYNPTSHHTTTDHIPEKK). Residues Lys-148, Lys-165, and Lys-167 each participate in a glycyl lysine isopeptide (Lys-Gly) (interchain with G-Cter in SUMO2) cross-link. Basic and acidic residues predominate over residues 156–165 (TTTDHIPEKK). The residue at position 181 (Lys-181) is an N6-acetyllysine. A Glycyl lysine isopeptide (Lys-Gly) (interchain with G-Cter in SUMO2) cross-link involves residue Lys-256. An N6-acetyllysine modification is found at Lys-264. A disordered region spans residues 286-325 (TQNASSSAADSRSGRKSKNNNKSSSQQSSSSSSSSSLSSC). The span at 305-325 (NNKSSSQQSSSSSSSSSLSSC) shows a compositional bias: low complexity. The PHD-type zinc finger occupies 360-409 (PRYCICNQVSYGEMVGCDNQDCPIEWFHYGCVGLTEAPKGKWYCPQCTAA). Zn(2+) contacts are provided by Cys-363, Cys-365, Cys-376, Cys-381, His-387, Cys-390, Cys-403, and Cys-406.

Belongs to the ING family. As to quaternary structure, interacts with H3K4me3 and to a lesser extent with H3K4me2. Component of the NuA4 histone acetyltransferase complex which contains the catalytic subunit KAT5/TIP60 and the subunits EP400, TRRAP/PAF400, BRD8/SMAP, EPC1, DMAP1/DNMAP1, RUVBL1/TIP49, RUVBL2, ING3, actin, ACTL6A/BAF53A, MORF4L1/MRG15, MORF4L2/MRGX, MRGBP, YEATS4/GAS41, VPS72/YL1 and MEAF6. The NuA4 complex interacts with MYC and the adenovirus E1A protein. HTATTIP/TIP60, EPC1, and ING3 together constitute a minimal HAT complex termed Piccolo NuA4. Component of a SWR1-like complex. Expressed in brain, heart, kidney, liver, lung, ovaries, placenta, prostate, skeletal muscle, small intestine, spleen, testis and thymus.

It is found in the nucleus. Component of the NuA4 histone acetyltransferase (HAT) complex which is involved in transcriptional activation of select genes principally by acetylation of nucleosomal histones H4 and H2A. This modification may both alter nucleosome - DNA interactions and promote interaction of the modified histones with other proteins which positively regulate transcription. This complex may be required for the activation of transcriptional programs associated with oncogene and proto-oncogene mediated growth induction, tumor suppressor mediated growth arrest and replicative senescence, apoptosis, and DNA repair. NuA4 may also play a direct role in DNA repair when directly recruited to sites of DNA damage. Component of a SWR1-like complex that specifically mediates the removal of histone H2A.Z/H2AZ1 from the nucleosome. This Homo sapiens (Human) protein is Inhibitor of growth protein 3 (ING3).